The sequence spans 77 residues: Dermatoxin-A1 (77 aa).

The first 22 residues, 1-22 (MAFLKKSLFLVLFLGLVPLFLC), serve as a signal peptide directing secretion. A propeptide spanning residues 23-42 (ENEKREGENEKEENDDQSEE) is cleaved from the precursor. Position 76 is a glutamine amide (Q76).

Belongs to the frog skin active peptide (FSAP) family. Dermatoxin subfamily. Expressed by the skin glands.

It is found in the secreted. Its function is as follows. Possesses a potent antimicrobial activity against Gram-positive and Gram-negative bacteria. Probably acts by disturbing membrane functions with its amphipathic structure. In Agalychnis annae (Blue-sided leaf frog), this protein is Dermatoxin-A1.